The chain runs to 163 residues: Nucleotide-binding protein YPDSF_2805 (163 aa).

This sequence belongs to the YajQ family.

In terms of biological role, nucleotide-binding protein. The polypeptide is Nucleotide-binding protein YPDSF_2805 (Yersinia pestis (strain Pestoides F)).